The primary structure comprises 64 residues: MSDLFRMEERRQMPILPTEPARKEGDGGGPQKPDVKRPDTSDLLRRMKRVDPDAARRYRQRSGE.

Composition is skewed to basic and acidic residues over residues 1-12 (MSDLFRMEERRQ) and 33-64 (PDVK…RSGE). The segment at 1–64 (MSDLFRMEER…ARRYRQRSGE (64 aa)) is disordered. Residue E64 forms an Isoglutamyl lysine isopeptide (Glu-Lys) (interchain with K-? in acceptor proteins) linkage.

The protein belongs to the ubiquitin-like protein UBact family.

Functionally, may function as a protein modifier covalently attached to lysine residues of substrate proteins. This may serve to target the modified proteins for degradation by proteasomes. This is Prokaryotic ubiquitin-like protein UBact from Chthonomonas calidirosea (strain DSM 23976 / ICMP 18418 / T49).